Consider the following 354-residue polypeptide: Peptide-N(4)-(N-acetyl-beta-D-glucosaminyl)asparagine amidase F (354 aa).

An N-terminal signal peptide occupies residues 1-40 (MRKLLIFSISAYLMAGIVSCKGVDSATPVTEDRLALNAVN). A disulfide bridge links C91 with C96. Catalysis depends on residues D100, E158, and E246. 2 cysteine pairs are disulfide-bonded: C244-C248 and C271-C292.

Monomer.

The enzyme catalyses Hydrolysis of an N(4)-(acetyl-beta-D-glucosaminyl)asparagine residue in which the glucosamine residue may be further glycosylated, to yield a (substituted) N-acetyl-beta-D-glucosaminylamine and a peptide containing an aspartate residue.. Its function is as follows. Cleaves an entire glycan from a glycoprotein. Requires that the glycosylated asparagine moiety (reaction 1) be substituted on its amino (R1) and carboxyl (R2) terminus with a polypeptide chain. This is Peptide-N(4)-(N-acetyl-beta-D-glucosaminyl)asparagine amidase F (ngl) from Elizabethkingia miricola (Chryseobacterium miricola).